The chain runs to 388 residues: ATP phosphoribosyltransferase regulatory subunit (388 aa).

This sequence belongs to the class-II aminoacyl-tRNA synthetase family. HisZ subfamily. As to quaternary structure, heteromultimer composed of HisG and HisZ subunits.

The protein localises to the cytoplasm. Its pathway is amino-acid biosynthesis; L-histidine biosynthesis; L-histidine from 5-phospho-alpha-D-ribose 1-diphosphate: step 1/9. Functionally, required for the first step of histidine biosynthesis. May allow the feedback regulation of ATP phosphoribosyltransferase activity by histidine. The protein is ATP phosphoribosyltransferase regulatory subunit of Acinetobacter baumannii (strain SDF).